Here is a 152-residue protein sequence, read N- to C-terminus: Snaclec 5 (152 aa).

The N-terminal stretch at methionine 1–alanine 23 is a signal peptide. 3 cysteine pairs are disulfide-bonded: cysteine 27–cysteine 38, cysteine 55–cysteine 148, and cysteine 123–cysteine 140. The region spanning tyrosine 34–lysine 149 is the C-type lectin domain.

This sequence belongs to the snaclec family. As to quaternary structure, heterodimer; disulfide-linked. In terms of tissue distribution, expressed by the venom gland.

It localises to the secreted. Interferes with one step of hemostasis (modulation of platelet aggregation, or coagulation cascade, for example). The sequence is that of Snaclec 5 from Bitis arietans (African puff adder).